The following is a 242-amino-acid chain: ATP synthase subunit a (242 aa).

A run of 6 helical transmembrane segments spans residues 29 to 49, 84 to 104, 114 to 134, 140 to 160, 181 to 201, and 203 to 223; these read SSIY…LAFY, FIPL…LGMT, IIVT…VGFV, FLTL…MIVI, MAGH…MIYL, and FLPI…AILQ.

Belongs to the ATPase A chain family. F-type ATPases have 2 components, CF(1) - the catalytic core - and CF(0) - the membrane proton channel. CF(1) has five subunits: alpha(3), beta(3), gamma(1), delta(1), epsilon(1). CF(0) has three main subunits: a(1), b(2) and c(9-12). The alpha and beta chains form an alternating ring which encloses part of the gamma chain. CF(1) is attached to CF(0) by a central stalk formed by the gamma and epsilon chains, while a peripheral stalk is formed by the delta and b chains.

It localises to the cell inner membrane. In terms of biological role, key component of the proton channel; it plays a direct role in the translocation of protons across the membrane. In Rickettsia conorii (strain ATCC VR-613 / Malish 7), this protein is ATP synthase subunit a.